The following is a 276-amino-acid chain: Large ribosomal subunit protein uL2 (276 aa).

The disordered stretch occupies residues 224 to 276 (VMNPVDHPHGGGEGKAPIGRKSPMTPWGKPTLGYKTRKKKNKSDKFIIRRRKK). The segment covering 258 to 276 (KTRKKKNKSDKFIIRRRKK) has biased composition (basic residues).

Belongs to the universal ribosomal protein uL2 family. Part of the 50S ribosomal subunit. Forms a bridge to the 30S subunit in the 70S ribosome.

One of the primary rRNA binding proteins. Required for association of the 30S and 50S subunits to form the 70S ribosome, for tRNA binding and peptide bond formation. It has been suggested to have peptidyltransferase activity; this is somewhat controversial. Makes several contacts with the 16S rRNA in the 70S ribosome. This Geobacillus kaustophilus (strain HTA426) protein is Large ribosomal subunit protein uL2.